Reading from the N-terminus, the 260-residue chain is MLTNYLLIIFCFLALFCSFMIIASKNPIHSILYLILVFCNVTFVLIILGVEFIAIIFLIVYVGAIAVLFLFVVMMLNIKILELDEVFWRYIPAGLLISSCFLFQLFTFVFNFSVVEVFGLFFYNGFYSINKLALNFSEIHTVPSGLLINGIYIFPNLSNLGIDQVFINSIYKEESFFCFVKLNEASTNLLGLSFELTNTEILGWLVYTYTFFIFLVVSLILLISMIGSIILVLNQNINIKRQVIFRQSLRDLKSSVSLKN.

A run of 6 helical transmembrane segments spans residues 2–22 (LTNY…FMII), 30–50 (SILY…ILGV), 52–72 (FIAI…FLFV), 101–121 (FLFQ…FGLF), 142–162 (VPSG…NLGI), and 211–231 (FFIF…SIIL).

The protein belongs to the complex I subunit 6 family.

The protein localises to the mitochondrion membrane. The enzyme catalyses a ubiquinone + NADH + 5 H(+)(in) = a ubiquinol + NAD(+) + 4 H(+)(out). In terms of biological role, core subunit of the mitochondrial membrane respiratory chain NADH dehydrogenase (Complex I) that is believed to belong to the minimal assembly required for catalysis. Complex I functions in the transfer of electrons from NADH to the respiratory chain. The immediate electron acceptor for the enzyme is believed to be ubiquinone. The protein is NADH-ubiquinone oxidoreductase chain 6 (ND6) of Acanthamoeba castellanii (Amoeba).